The following is a 456-amino-acid chain: MRSDWIAPRRGQANVTQMHYARQGVITEEMDFVARRENLPADLIRDEVARGRMVIPANINHTNLEPMAIGIASKCKVNANIGASPNASNIDEEVEKLKLAVKYGADTVMDLSTGGGNLDEIRTAIINASPVPIGTVPVYQALESVHGRIEKHSADDFLHVIEKHCEQGVDYQTIHAGLLIEHLPKVKSRITGIVSRGGGIIAQWVLYHHKQNPLYTHFRDIIEIFKRYDCSFGLGDSLRPGCLHDASDDAQLSELKTLGQLTRVAWEHDVQVMVEGPGHVPMDQIEFNVRKQMEECSEAPFYVLGPLVTDIAPGYDHITSAIGAAMAGWYGTAMLCYVTPKEHLGLPNAEDVRNGLIAYKIAAHAADIARHRPGARDRDDELSRARYAFDWNKQFDLSLDPERAREYHDETLPADIYKTAEFCSMCGPKHCPMQTKITEEDLTELEKFLEKDSALA.

Residues N80, M109, Y139, H175, 195–197 (SRG), 236–239 (DSLR), and E275 contribute to the substrate site. H279 provides a ligand contact to Zn(2+). Y302 is a binding site for substrate. Residue H343 coordinates Zn(2+). [4Fe-4S] cluster contacts are provided by C423, C426, and C431.

This sequence belongs to the ThiC family. [4Fe-4S] cluster serves as cofactor.

The catalysed reaction is 5-amino-1-(5-phospho-beta-D-ribosyl)imidazole + S-adenosyl-L-methionine = 4-amino-2-methyl-5-(phosphooxymethyl)pyrimidine + CO + 5'-deoxyadenosine + formate + L-methionine + 3 H(+). The protein operates within cofactor biosynthesis; thiamine diphosphate biosynthesis. Its function is as follows. Catalyzes the synthesis of the hydroxymethylpyrimidine phosphate (HMP-P) moiety of thiamine from aminoimidazole ribotide (AIR) in a radical S-adenosyl-L-methionine (SAM)-dependent reaction. This chain is Phosphomethylpyrimidine synthase, found in Synechococcus sp. (strain ATCC 27144 / PCC 6301 / SAUG 1402/1) (Anacystis nidulans).